A 508-amino-acid polypeptide reads, in one-letter code: Photosystem II CP47 reaction center protein (508 aa).

A run of 6 helical transmembrane segments spans residues 21–36, 101–115, 140–156, 203–218, 237–252, and 457–472; these read SVHIMHTALVAGWAGS, IVFSGLCFLAAIWHW, GIHLFLAGLACFGFGAF, IAAGTLGILAGLFHLS, VLSSSIAAVFFAAFVV, and SFALLFFFGHIWHGSR.

It belongs to the PsbB/PsbC family. PsbB subfamily. PSII is composed of 1 copy each of membrane proteins PsbA, PsbB, PsbC, PsbD, PsbE, PsbF, PsbH, PsbI, PsbJ, PsbK, PsbL, PsbM, PsbT, PsbX, PsbY, PsbZ, Psb30/Ycf12, at least 3 peripheral proteins of the oxygen-evolving complex and a large number of cofactors. It forms dimeric complexes. Requires Binds multiple chlorophylls. PSII binds additional chlorophylls, carotenoids and specific lipids. as cofactor.

It is found in the plastid. The protein resides in the chloroplast thylakoid membrane. One of the components of the core complex of photosystem II (PSII). It binds chlorophyll and helps catalyze the primary light-induced photochemical processes of PSII. PSII is a light-driven water:plastoquinone oxidoreductase, using light energy to abstract electrons from H(2)O, generating O(2) and a proton gradient subsequently used for ATP formation. In Helianthus annuus (Common sunflower), this protein is Photosystem II CP47 reaction center protein.